A 364-amino-acid chain; its full sequence is MAFLQSAYLVMVFTVPIAGVILNTYVLRKLIRVARKSVVRFETTSGLPLAAMSVGDSITLCALLMQAIFHITPKGEVPTVVLSSICKFGIFLIHSTSAFSVWCWFFLSVLRYIAVFHPFKYRTIWRQPRNALKFLAGAVGMFQIYTLIFVTYRQEEKSCGEYDVFHESAFKHVHLLDIFLFYAIPSLLRITLDFLVLIHCYSPFSVEGLDRVTIDRRYAISGPATTKRFSHTGETDTLDNKAHVALAISITASTNTPSVKRIHHGNPKKKTAMVMRSILISVLNLLLNLPSHIFRAWASYDESSLENEIVRTLEPIAQMMYFSQFACNAFYLATSIYETNGSPRNTVISSSNRHVSRCISDDEA.

Residue Met1 is a topological domain, extracellular. A helical membrane pass occupies residues 2 to 22; that stretch reads AFLQSAYLVMVFTVPIAGVIL. Residues 23 to 48 lie on the Cytoplasmic side of the membrane; sequence NTYVLRKLIRVARKSVVRFETTSGLP. The helical transmembrane segment at 49–69 threads the bilayer; sequence LAAMSVGDSITLCALLMQAIF. Residues 70 to 89 lie on the Extracellular side of the membrane; sequence HITPKGEVPTVVLSSICKFG. The helical transmembrane segment at 90-110 threads the bilayer; it reads IFLIHSTSAFSVWCWFFLSVL. Topologically, residues 111-130 are cytoplasmic; the sequence is RYIAVFHPFKYRTIWRQPRN. The helical transmembrane segment at 131–151 threads the bilayer; the sequence is ALKFLAGAVGMFQIYTLIFVT. At 152–177 the chain is on the extracellular side; it reads YRQEEKSCGEYDVFHESAFKHVHLLD. The helical transmembrane segment at 178 to 198 threads the bilayer; that stretch reads IFLFYAIPSLLRITLDFLVLI. Topologically, residues 199-277 are cytoplasmic; the sequence is HCYSPFSVEG…KKKTAMVMRS (79 aa). A helical transmembrane segment spans residues 278-298; that stretch reads ILISVLNLLLNLPSHIFRAWA. Residues 299–315 are Extracellular-facing; it reads SYDESSLENEIVRTLEP. Residues 316-336 traverse the membrane as a helical segment; the sequence is IAQMMYFSQFACNAFYLATSI. Over 337-364 the chain is Cytoplasmic; sequence YETNGSPRNTVISSSNRHVSRCISDDEA.

The protein belongs to the G-protein coupled receptor 1 family.

Its subcellular location is the cell membrane. In terms of biological role, not known. Putative receptor. The sequence is that of Probable G-protein coupled receptor AH9.4 from Caenorhabditis elegans.